The primary structure comprises 526 residues: Bifunctional purine biosynthesis protein PurH (526 aa).

The 145-residue stretch at 1 to 145 (MIRTALLSVS…KNHQDVTVLI (145 aa)) folds into the MGS-like domain.

It belongs to the PurH family.

It catalyses the reaction (6R)-10-formyltetrahydrofolate + 5-amino-1-(5-phospho-beta-D-ribosyl)imidazole-4-carboxamide = 5-formamido-1-(5-phospho-D-ribosyl)imidazole-4-carboxamide + (6S)-5,6,7,8-tetrahydrofolate. The enzyme catalyses IMP + H2O = 5-formamido-1-(5-phospho-D-ribosyl)imidazole-4-carboxamide. Its pathway is purine metabolism; IMP biosynthesis via de novo pathway; 5-formamido-1-(5-phospho-D-ribosyl)imidazole-4-carboxamide from 5-amino-1-(5-phospho-D-ribosyl)imidazole-4-carboxamide (10-formyl THF route): step 1/1. It functions in the pathway purine metabolism; IMP biosynthesis via de novo pathway; IMP from 5-formamido-1-(5-phospho-D-ribosyl)imidazole-4-carboxamide: step 1/1. The sequence is that of Bifunctional purine biosynthesis protein PurH from Polynucleobacter necessarius subsp. necessarius (strain STIR1).